A 44-amino-acid chain; its full sequence is Defensin ARD1 (44 aa).

3 disulfides stabilise this stretch: C7-C32, C18-C40, and C22-C42.

It localises to the secreted. In terms of biological role, possesses potent anti-fungal activity. The sequence is that of Defensin ARD1 from Archaeoprepona demophon (One-spotted leafwing butterfly).